Reading from the N-terminus, the 63-residue chain is Small ribosomal subunit protein bS21 (63 aa).

Basic and acidic residues predominate over residues 40–52 (KPSVKRKLKSEAA). The interval 40–63 (KPSVKRKLKSEAARKRKNKRGRRY) is disordered. Basic residues predominate over residues 53 to 63 (RKRKNKRGRRY).

Belongs to the bacterial ribosomal protein bS21 family.

This is Small ribosomal subunit protein bS21 from Limosilactobacillus reuteri (strain DSM 20016) (Lactobacillus reuteri).